The chain runs to 306 residues: Homoserine kinase (306 aa).

90 to 100 lines the ATP pocket; that stretch reads PLARGLGSSAS.

It belongs to the GHMP kinase family. Homoserine kinase subfamily.

It is found in the cytoplasm. It carries out the reaction L-homoserine + ATP = O-phospho-L-homoserine + ADP + H(+). The protein operates within amino-acid biosynthesis; L-threonine biosynthesis; L-threonine from L-aspartate: step 4/5. Functionally, catalyzes the ATP-dependent phosphorylation of L-homoserine to L-homoserine phosphate. The polypeptide is Homoserine kinase (Staphylococcus epidermidis (strain ATCC 35984 / DSM 28319 / BCRC 17069 / CCUG 31568 / BM 3577 / RP62A)).